A 545-amino-acid chain; its full sequence is Oligopeptide-binding protein OppA (545 aa).

The N-terminal stretch at 1 to 20 is a signal peptide; that stretch reads MKKRWSIVTLMLIFTLVLSA. The N-palmitoyl cysteine moiety is linked to residue Cys-21. The S-diacylglycerol cysteine moiety is linked to residue Cys-21. Thr-470 carries the phosphothreonine modification.

It belongs to the bacterial solute-binding protein 5 family. In terms of assembly, the complex is composed of two ATP-binding proteins (OppD and OppF), two transmembrane proteins (OppB and OppC) and a solute-binding protein (OppA). OppA interacts with FloT in detergent-resistant membranes (DRM). Colocalizes rarely with FloT membrane assemblies.

The protein resides in the cell membrane. The protein localises to the membrane raft. In terms of biological role, part of the ABC transporter complex OppABCDF involved in the uptake of oligopeptides. Plays an important nutritional role. Binds peptides containing up to five amino acids residues regardless of their sequence, with highest affinity for tetra- and pentapeptides. Binds to the sporulation-promoting peptide PhrE (Ser-Arg-Asn-Val-Thr). Required for sporulation and genetic competence. This chain is Oligopeptide-binding protein OppA, found in Bacillus subtilis (strain 168).